The sequence spans 434 residues: Trigger factor (434 aa).

The 86-residue stretch at 160 to 245 (GDKVKMNFVG…LTEVQAAQLP (86 aa)) folds into the PPIase FKBP-type domain.

This sequence belongs to the FKBP-type PPIase family. Tig subfamily.

It localises to the cytoplasm. The catalysed reaction is [protein]-peptidylproline (omega=180) = [protein]-peptidylproline (omega=0). Involved in protein export. Acts as a chaperone by maintaining the newly synthesized protein in an open conformation. Functions as a peptidyl-prolyl cis-trans isomerase. This chain is Trigger factor, found in Shewanella denitrificans (strain OS217 / ATCC BAA-1090 / DSM 15013).